The sequence spans 169 residues: Fumarase E (169 aa).

It belongs to the MtlR/FumE family. As to quaternary structure, homodimer.

The catalysed reaction is (S)-malate = fumarate + H2O. Functionally, in vitro catalyzes the addition of water to fumarate, forming malate. Cannot catalyze the reverse reaction. Cannot use the cis-isomer maleate as substrate. The protein is Fumarase E of Shigella flexneri.